The sequence spans 185 residues: Large ribosomal subunit protein uL5 (185 aa).

The protein belongs to the universal ribosomal protein uL5 family. In terms of assembly, part of the 50S ribosomal subunit; part of the 5S rRNA/L5/L18/L25 subcomplex. Contacts the 5S rRNA and the P site tRNA. Forms a bridge to the 30S subunit in the 70S ribosome.

Functionally, this is one of the proteins that bind and probably mediate the attachment of the 5S RNA into the large ribosomal subunit, where it forms part of the central protuberance. In the 70S ribosome it contacts protein S13 of the 30S subunit (bridge B1b), connecting the 2 subunits; this bridge is implicated in subunit movement. Contacts the P site tRNA; the 5S rRNA and some of its associated proteins might help stabilize positioning of ribosome-bound tRNAs. This Rhizobium johnstonii (strain DSM 114642 / LMG 32736 / 3841) (Rhizobium leguminosarum bv. viciae) protein is Large ribosomal subunit protein uL5.